Here is a 166-residue protein sequence, read N- to C-terminus: Regulatory protein RecX (166 aa).

It belongs to the RecX family.

Its subcellular location is the cytoplasm. Modulates RecA activity. The chain is Regulatory protein RecX from Klebsiella pneumoniae subsp. pneumoniae (strain ATCC 700721 / MGH 78578).